Reading from the N-terminus, the 62-residue chain is uncharacterized protein (62 aa).

This is an uncharacterized protein from Methanocaldococcus jannaschii (strain ATCC 43067 / DSM 2661 / JAL-1 / JCM 10045 / NBRC 100440) (Methanococcus jannaschii).